The sequence spans 509 residues: Photosystem II CP47 reaction center protein (509 aa).

A run of 6 helical transmembrane segments spans residues 21 to 36 (AVHL…WAGS), 101 to 115 (IILS…IWHW), 140 to 156 (GIHL…FGAF), 203 to 218 (IAAG…FHLT), 237 to 252 (VLSS…AFVT), and 457 to 472 (NFAL…HGGR).

The protein belongs to the PsbB/PsbC family. PsbB subfamily. In terms of assembly, PSII is composed of 1 copy each of membrane proteins PsbA, PsbB, PsbC, PsbD, PsbE, PsbF, PsbH, PsbI, PsbJ, PsbK, PsbL, PsbM, PsbT, PsbX, PsbY, PsbZ, Psb30/Ycf12, at least 3 peripheral proteins of the oxygen-evolving complex and a large number of cofactors. It forms dimeric complexes. Binds multiple chlorophylls. PSII binds additional chlorophylls, carotenoids and specific lipids. serves as cofactor.

The protein resides in the plastid. It localises to the chloroplast thylakoid membrane. Functionally, one of the components of the core complex of photosystem II (PSII). It binds chlorophyll and helps catalyze the primary light-induced photochemical processes of PSII. PSII is a light-driven water:plastoquinone oxidoreductase, using light energy to abstract electrons from H(2)O, generating O(2) and a proton gradient subsequently used for ATP formation. In Trieres chinensis (Marine centric diatom), this protein is Photosystem II CP47 reaction center protein.